A 230-amino-acid polypeptide reads, in one-letter code: Ribonuclease 3 (230 aa).

An RNase III domain is found at 5-125 (YSRFYNILGY…VIGAIYLDSD (121 aa)). Glu-40 provides a ligand contact to Mg(2+). The active site involves Asp-44. Asp-111 and Glu-114 together coordinate Mg(2+). The active site involves Glu-114. The 71-residue stretch at 153–223 (DSKSKLQEIL…AEKMIEMLSQ (71 aa)) folds into the DRBM domain.

The protein belongs to the ribonuclease III family. In terms of assembly, homodimer. It depends on Mg(2+) as a cofactor.

It is found in the cytoplasm. The catalysed reaction is Endonucleolytic cleavage to 5'-phosphomonoester.. Its function is as follows. Digests double-stranded RNA. Involved in the processing of primary rRNA transcript to yield the immediate precursors to the large and small rRNAs (23S and 16S). Processes some mRNAs, and tRNAs when they are encoded in the rRNA operon. Processes pre-crRNA and tracrRNA of type II CRISPR loci if present in the organism. The protein is Ribonuclease 3 of Francisella tularensis subsp. tularensis (strain FSC 198).